Reading from the N-terminus, the 491-residue chain is NADH-ubiquinone oxidoreductase chain 4 (491 aa).

A run of 14 helical transmembrane segments spans residues 2–22 (IFHK…IINV), 37–57 (ALEW…AFDM), 89–109 (ISLF…LISW), 114–134 (FLLK…MGVF), 139–159 (LLLF…LIGV), 169–189 (ASYY…LGIF), 215–235 (WIFA…PFHI), 245–265 (PVSG…YGFL), 271–291 (ILPA…VIAI), 308–328 (IAYS…THTI), 332–352 (VAAV…FIAV), 372–392 (FSMP…MAIP), 412–432 (IVIG…SLYL), and 457–477 (IAIS…SLII).

This sequence belongs to the complex I subunit 4 family.

The protein localises to the mitochondrion membrane. The enzyme catalyses a ubiquinone + NADH + 5 H(+)(in) = a ubiquinol + NAD(+) + 4 H(+)(out). Its function is as follows. Core subunit of the mitochondrial membrane respiratory chain NADH dehydrogenase (Complex I) that is believed to belong to the minimal assembly required for catalysis. Complex I functions in the transfer of electrons from NADH to the respiratory chain. The immediate electron acceptor for the enzyme is believed to be ubiquinone. The sequence is that of NADH-ubiquinone oxidoreductase chain 4 (ND4) from Metridium senile (Brown sea anemone).